We begin with the raw amino-acid sequence, 447 residues long: MELRMKKVSVIAAAVAATLAAGSAFAVDFHGYMRAGVGVSADGGQQVTFEKQKIGRLGNEGDIYGEIQLGQEVYNNNGKTFYVDSMIAVTSNGSNDWEGTASNCGTTVSHPDGQDPSATTKCVDDAEFALRQFNVQAKGVLDFAPEATLWAGKRYYQRHDIHISDFYYWNISGAGAGVEGIEAGPGQLSFAWVRNDRNDNFKLGENNPGDTPDAGNDGGAANVNTLDLRYAGLPVWENGSLELGLNYALVNETDDASDAAKDAKDGVMFTAELTQGLDSGFNKTVFQYGTEGYSKTMAFYGDGSWYGAEANDGASGYRLINWGVIGMGQNWEMGHQLVYGVGEDMWDGQDKLETMSVVVRPMYKWDDNHKTIFEAGYAIDDNDGAENKFGKLTVAQAWSAGSSFWARPEIRVYASYLTADKDDNSNAFDGGRSDDTFQFGVQAEAWW.

Positions 1–26 (MELRMKKVSVIAAAVAATLAAGSAFA) are cleaved as a signal peptide.

The protein belongs to the porin LamB (TC 1.B.3) family. As to quaternary structure, homotrimer formed of three 18-stranded antiparallel beta-barrels, containing three independent channels.

Its subcellular location is the cell outer membrane. It catalyses the reaction beta-maltose(in) = beta-maltose(out). In terms of biological role, involved in the transport of maltose and maltodextrins. This is Maltoporin from Vibrio campbellii (strain ATCC BAA-1116).